The primary structure comprises 795 residues: Putative replication origin-binding protein (795 aa).

Residues 121–289 (WLSNDKIKTL…DNFGKSIVVN (169 aa)) enclose the Helicase ATP-binding domain. 134–141 (SPMGTGKT) provides a ligand contact to ATP.

This sequence belongs to the mimivirus R1 family.

In terms of biological role, probably involved in DNA replication. May bind the genome origin of replication (ori). The polypeptide is Putative replication origin-binding protein (Acanthamoeba polyphaga (Amoeba)).